Consider the following 288-residue polypeptide: UAP56-interacting factor (288 aa).

The UAP56-binding motif motif lies at 11-29 (TIDKIDMSLDDIIKLNKQE). Positions 183 to 202 (DLPELSKTPPWRTSVSSGGS) are disordered.

The protein belongs to the UIF family.

The protein resides in the nucleus. It localises to the nucleoplasm. It is found in the nucleus speckle. Functionally, required for mRNA export from the nucleus to the cytoplasm. Acts as an adapter that uses the ddx39b/uap56-nfx1 pathway to ensure efficient mRNA export and delivering to the nuclear pore. This Xenopus laevis (African clawed frog) protein is UAP56-interacting factor (fyttd1).